The sequence spans 121 residues: MPKLYTCLICGYKGLIQNPLNNDGEYQKTFDICPCCDFEYGYSEDHDVSLGFIVTPDYLIDAAIQLYRKQWIENGMKTANPEDIPEELRNGDCLKFEVLLKQLNSLNLDTENFEIKGFNGY.

This is an uncharacterized protein from Bacillus subtilis (strain 168).